We begin with the raw amino-acid sequence, 2180 residues long: Genome polyprotein (2180 aa).

Disordered stretches follow at residues 507-529, 624-679, 703-809, and 822-848; these read DGAD…AKDP, QPQK…YPIQ, KRAK…NTLP, and SEVE…PPKM. Residues 573–624 are a coiled coil; the sequence is SKNQGLIRVLEQQLQDLNKRICPPGTSLFHFFDQQKSEMASLKEQIRLLKEQ. 2 stretches are compositionally biased toward polar residues: residues 631-643 and 670-679; these read DTPS…QPFH and PSLFSQYPIQ. Residues 703–716 show a composition bias toward basic and acidic residues; the sequence is KRAKKKLQKDEVKQ. Over residues 759 to 771 the composition is skewed to polar residues; sequence SEDTSSQSYISTE. A compositionally biased stretch (low complexity) spans 784 to 807; sequence SEESTQLSQLSSSSNDSPENNENT. Residues 822–832 are compositionally biased toward acidic residues; that stretch reads SEVEDEVDGMT. A CCHC-type zinc finger spans residues 1113–1126; the sequence is CFTCGKIGHFSRNC. The active-site For protease activity; shared with dimeric partner is Asp-1227. Mg(2+) is bound by residues Asp-1480, Asp-1543, and Asp-1544. Disordered stretches follow at residues 1824–1848, 2115–2145, and 2161–2180; these read RRTR…YKLS, NIVK…KNKC, and YSTK…EPCI. A compositionally biased stretch (polar residues) spans 1828–1847; it reads SNSTKSKADSSQSTGSSYKL. Residues 2120–2145 are compositionally biased toward basic residues; the sequence is SPRKRKGKAKSKSSTRNEKRRAKNKC. Over residues 2163–2180 the composition is skewed to polar residues; that stretch reads TKPSTPSWTQDSSSEPCI.

The protein belongs to the Petuviruses genome polyprotein family.

The enzyme catalyses DNA(n) + a 2'-deoxyribonucleoside 5'-triphosphate = DNA(n+1) + diphosphate. In terms of biological role, encodes presumably for at least four polypeptides: Movement protein (MP), capsid protein (CP), Protease (PR), and reverse transcriptase (RT). This chain is Genome polyprotein, found in Petunia (PVCV).